We begin with the raw amino-acid sequence, 145 residues long: Transcriptional regulator MraZ (145 aa).

2 consecutive SpoVT-AbrB domains span residues Asn7–Leu54 and Gly83–Ala126.

The protein belongs to the MraZ family. Forms oligomers.

It localises to the cytoplasm. It is found in the nucleoid. This chain is Transcriptional regulator MraZ, found in Rhizobium leguminosarum bv. trifolii (strain WSM2304).